A 330-amino-acid polypeptide reads, in one-letter code: DNA-directed RNA polymerase subunit alpha (330 aa).

The tract at residues 1–236 (MQGSVTEFLK…EQLDAFVDLR (236 aa)) is alpha N-terminal domain (alpha-NTD). The segment at 250–330 (FDPILLRPVD…NWPPASIAED (81 aa)) is alpha C-terminal domain (alpha-CTD).

The protein belongs to the RNA polymerase alpha chain family. Homodimer. The RNAP catalytic core consists of 2 alpha, 1 beta, 1 beta' and 1 omega subunit. When a sigma factor is associated with the core the holoenzyme is formed, which can initiate transcription.

The catalysed reaction is RNA(n) + a ribonucleoside 5'-triphosphate = RNA(n+1) + diphosphate. DNA-dependent RNA polymerase catalyzes the transcription of DNA into RNA using the four ribonucleoside triphosphates as substrates. This is DNA-directed RNA polymerase subunit alpha from Vibrio cholerae serotype O1 (strain ATCC 39315 / El Tor Inaba N16961).